The following is a 172-amino-acid chain: Large ribosomal subunit protein uL10 (172 aa).

The protein belongs to the universal ribosomal protein uL10 family. Part of the ribosomal stalk of the 50S ribosomal subunit. The N-terminus interacts with L11 and the large rRNA to form the base of the stalk. The C-terminus forms an elongated spine to which L12 dimers bind in a sequential fashion forming a multimeric L10(L12)X complex.

Its function is as follows. Forms part of the ribosomal stalk, playing a central role in the interaction of the ribosome with GTP-bound translation factors. This Brucella suis biovar 1 (strain 1330) protein is Large ribosomal subunit protein uL10.